Reading from the N-terminus, the 186-residue chain is Ribosome-recycling factor (186 aa).

It belongs to the RRF family.

Its subcellular location is the cytoplasm. Responsible for the release of ribosomes from messenger RNA at the termination of protein biosynthesis. May increase the efficiency of translation by recycling ribosomes from one round of translation to another. In Bordetella parapertussis (strain 12822 / ATCC BAA-587 / NCTC 13253), this protein is Ribosome-recycling factor.